A 496-amino-acid chain; its full sequence is Glutathione reductase, cytosolic (496 aa).

FAD is bound by residues Ser32, Gly33, Glu52, Thr69, Cys70, and Lys78. Ser32 contributes to the glutathione binding site. A disulfide bond links Cys70 and Cys75. Tyr127 contributes to the glutathione binding site. Residue Gly143 participates in FAD binding. 6 residues coordinate NADP(+): Gly208, Ile211, Glu214, Arg231, Arg237, and Gly294. FAD-binding residues include Asp335 and Thr343. Ala373 is an NADP(+) binding site. Position 469 (His469) interacts with FAD. His469 (proton acceptor) is an active-site residue.

Belongs to the class-I pyridine nucleotide-disulfide oxidoreductase family. In terms of assembly, homodimer. FAD serves as cofactor.

Its subcellular location is the cytoplasm. The catalysed reaction is 2 glutathione + NADP(+) = glutathione disulfide + NADPH + H(+). Its function is as follows. Catalyzes the reduction of glutathione disulfide (GSSG) to reduced glutathione (GSH). Constitutes the major mechanism to maintain a high GSH:GSSG ratio in the cytosol. In Oryza sativa subsp. japonica (Rice), this protein is Glutathione reductase, cytosolic (GRC2).